A 527-amino-acid chain; its full sequence is Bacillolysin (527 aa).

The N-terminal stretch at 1–28 (MKKSYLATSLTLSIAVGVSGFTSVPAFA) is a signal peptide. A propeptide spans 29–223 (KTKIDYHKQW…VINKYNMLDH (195 aa)) (activation peptide). Ca(2+) contacts are provided by D276, D278, and D354. H358 provides a ligand contact to Zn(2+). The active site involves E359. Positions 362 and 382 each coordinate Zn(2+). Ca(2+) is bound by residues D393, N394, D396, E401, Y404, T405, and D411. Catalysis depends on H442, which acts as the Proton donor.

The protein belongs to the peptidase M4 family. Ca(2+) serves as cofactor. Requires Zn(2+) as cofactor.

Its subcellular location is the secreted. The catalysed reaction is Similar, but not identical, to that of thermolysin.. Extracellular zinc metalloprotease. This chain is Bacillolysin (npr), found in Brevibacillus brevis (Bacillus brevis).